Here is an 89-residue protein sequence, read N- to C-terminus: MSVTAERKAQIIKEFATVEGDTGSPEVQVAILTERINNLTEHFKDHKKDNHSRRGLLALVSSRRSLLDYLKKKDEARYTKLIGALGIRR.

Belongs to the universal ribosomal protein uS15 family. As to quaternary structure, part of the 30S ribosomal subunit. Forms a bridge to the 50S subunit in the 70S ribosome, contacting the 23S rRNA.

Functionally, one of the primary rRNA binding proteins, it binds directly to 16S rRNA where it helps nucleate assembly of the platform of the 30S subunit by binding and bridging several RNA helices of the 16S rRNA. Its function is as follows. Forms an intersubunit bridge (bridge B4) with the 23S rRNA of the 50S subunit in the ribosome. This Rhizobium meliloti (strain 1021) (Ensifer meliloti) protein is Small ribosomal subunit protein uS15.